A 25-amino-acid chain; its full sequence is Retinol-binding protein 3 (25 aa).

It is found in the secreted. Its subcellular location is the extracellular space. The protein localises to the extracellular matrix. It localises to the interphotoreceptor matrix. In terms of biological role, IRBP shuttles 11-cis and all trans retinoids between the retinol isomerase in the pigment epithelium and the visual pigments in the photoreceptor cells of the retina. This chain is Retinol-binding protein 3 (RBP3), found in Sus scrofa (Pig).